Reading from the N-terminus, the 374-residue chain is Palmitoyltransferase PFA5 (374 aa).

Residues 1–13 (MALSWNIRIRRRS) lie on the Cytoplasmic side of the membrane. Residues 14-34 (WFRFILPIIVLGLLCYGTWAY) form a helical membrane-spanning segment. Over 35-55 (CHKLCYEQVDKRLRQKSVSVG) the chain is Lumenal. Residues 56 to 76 (LICAVCFLDVVVIFIWLQIVI) form a helical membrane-spanning segment. Over 77–173 (LVGPGTQPHV…TVIGRDNYRL (97 aa)) the chain is Cytoplasmic. The DHHC domain maps to 129-179 (IWCSECQSLKMERTHHSSELGHCIPRFDHYCMWIGTVIGRDNYRLFVQFAA). The helical transmembrane segment at 174–194 (FVQFAAYFSTLLLIMWVSICV) threads the bilayer. Residues 195–217 (YIRIITQHNHNYSPNLNANIIST) are Lumenal-facing. A helical transmembrane segment spans residues 218–238 (LVFAILGWLLTASLLASSIFY). The Cytoplasmic portion of the chain corresponds to 239–374 (MSQNKTSLEA…ASGDDSDPAY (136 aa)).

Belongs to the DHHC palmitoyltransferase family. PFA5 subfamily. Autopalmitoylated.

It is found in the membrane. The catalysed reaction is L-cysteinyl-[protein] + hexadecanoyl-CoA = S-hexadecanoyl-L-cysteinyl-[protein] + CoA. This Saccharomyces cerevisiae (strain ATCC 204508 / S288c) (Baker's yeast) protein is Palmitoyltransferase PFA5 (PFA5).